A 237-amino-acid polypeptide reads, in one-letter code: CD63 antigen (237 aa).

Over 1–11 the chain is Cytoplasmic; the sequence is MAVEGGMKCVK. A helical transmembrane segment spans residues 12 to 32; the sequence is FLLYVLLLVFCACAVGLIAVG. The Extracellular portion of the chain corresponds to 33 to 51; it reads VGTHLVLNQTITHGATPSF. Residue N40 is glycosylated (N-linked (GlcNAc...) asparagine). The helical transmembrane segment at 52–72 threads the bilayer; that stretch reads LLPVVIIAVGAFLFLVAFVGC. The Cytoplasmic portion of the chain corresponds to 73-81; it reads CGACKENYC. Residues 82–102 traverse the membrane as a helical segment; it reads LMITFAIFLSLIMLVEVAAAI. The Extracellular portion of the chain corresponds to 103-202; that stretch reads AGYVFRDKVR…KIAAWLRKNV (100 aa). N130, N150, and N171 each carry an N-linked (GlcNAc...) asparagine glycan. The chain crosses the membrane as a helical span at residues 203–223; the sequence is LVVAAAALGIAFVEILGIVLA. The Cytoplasmic portion of the chain corresponds to 224–237; it reads CCLVKSIRSGYEVM. Residues 233 to 237 carry the Lysosomal targeting motif motif; it reads GYEVM.

The protein belongs to the tetraspanin (TM4SF) family. As to quaternary structure, interacts with TIMP1 and ITGB1 and recruits TIMP1 to ITGB1. Interacts with CD9. Identified in a complex with CD9 and ITGB3. Interacts with PMEL. Interacts with KDR/VEGFR2; identified in a complex with ITGB1 and KDR/VEGFR2 and is required to recruit KDR to ITGB1 complexes. Interacts with SYT7. Palmitoylated at a low, basal level in unstimulated platelets. The level of palmitoylation increases when platelets are activated by thrombin (in vitro).

It is found in the cell membrane. The protein resides in the lysosome membrane. The protein localises to the late endosome membrane. It localises to the endosome. Its subcellular location is the multivesicular body. It is found in the melanosome. The protein resides in the secreted. The protein localises to the extracellular exosome. It localises to the cell surface. Functions as a cell surface receptor for TIMP1 and plays a role in the activation of cellular signaling cascades. Plays a role in the activation of ITGB1 and integrin signaling, leading to the activation of AKT, FAK/PTK2 and MAP kinases. Promotes cell survival, reorganization of the actin cytoskeleton, cell adhesion, spreading and migration, via its role in the activation of AKT and FAK/PTK2. Plays a role in VEGFA signaling via its role in regulating the internalization of KDR/VEGFR2. Plays a role in intracellular vesicular transport processes, and is required for normal trafficking of the PMEL luminal domain that is essential for the development and maturation of melanocytes. Plays a role in the adhesion of leukocytes onto endothelial cells via its role in the regulation of SELP trafficking. May play a role in mast cell degranulation in response to Ms4a2/FceRI stimulation, but not in mast cell degranulation in response to other stimuli. In Bos taurus (Bovine), this protein is CD63 antigen (CD63).